The sequence spans 162 residues: Caveolin-2 (162 aa).

Topologically, residues 1 to 86 are cytoplasmic; that stretch reads MGLETEKADV…FEISKYVIYK (86 aa). Tyr19 is subject to Phosphotyrosine; by SRC. Phosphoserine is present on residues Ser20 and Ser23. Tyr27 is modified (phosphotyrosine; by SRC). The residue at position 36 (Ser36) is a Phosphoserine. Residues 87–107 constitute an intramembrane region (helical); it reads FLTFFLAIPMAFAAGILFAIL. Topologically, residues 108–162 are cytoplasmic; it reads SCLHIWIIMPFVKTCLMVLPSVQTIWKTITDVVIAPLCTSVGRSFSSISLQLSHD.

It belongs to the caveolin family. Monomer or homodimer. Interacts with CAV1; the interaction forms a stable heterooligomeric complex that is required for targeting to lipid rafts and for caveolae formation. Tyrosine phosphorylated forms do not form heterooligomers with the Tyr-19-phosphorylated form existing as a monomer or dimer, and the Tyr-27-form as a monomer only. Interacts (tyrosine phosphorylated form) with the SH2 domain-containing proteins, RASA1, NCK1 and SRC. Interacts (tyrosine phosphorylated form) with INSR, the interaction (Tyr-27-phosphorylated form) is increased on insulin stimulation. Interacts (Tyr-19 phosphorylated form) with MAPK1 (phosphorylated form); the interaction, promoted by insulin, leads to nuclear location and MAPK1 activation. Interacts with STAT3; the interaction is increased on insulin-induced tyrosine phosphorylation leading to STAT activation. Post-translationally, phosphorylated on serine and tyrosine residues. CAV1 promotes phosphorylation on Ser-23 which then targets the complex to the plasma membrane, lipid rafts and caveolae. Phosphorylation on Ser-36 appears to modulate mitosis in endothelial cells. Phosphorylation on both Tyr-19 and Tyr-27 is required for insulin-induced 'Ser-727' phosphorylation of STAT3 and its activation. Phosphorylation on Tyr-19 is required for insulin-induced phosphorylation of MAPK1 and DNA binding of STAT3. Tyrosine phosphorylation is induced by both EGF and insulin (By. similarity).

The protein localises to the nucleus. Its subcellular location is the cytoplasm. It localises to the golgi apparatus membrane. It is found in the cell membrane. The protein resides in the membrane. The protein localises to the caveola. May act as a scaffolding protein within caveolar membranes. Interacts directly with G-protein alpha subunits and can functionally regulate their activity. Acts as an accessory protein in conjunction with CAV1 in targeting to lipid rafts and driving caveolae formation. The Ser-36 phosphorylated form has a role in modulating mitosis in endothelial cells. Positive regulator of cellular mitogenesis of the MAPK signaling pathway. Required for the insulin-stimulated nuclear translocation and activation of MAPK1 and STAT3, and the subsequent regulation of cell cycle progression. In Mustela putorius furo (European domestic ferret), this protein is Caveolin-2 (CAV2).